The chain runs to 167 residues: Aphrodisin (167 aa).

An N-terminal signal peptide occupies residues 1-16; it reads MVKILLLALVFSLAHA. Residue glutamine 17 is modified to Pyrrolidone carboxylic acid. 2 cysteine pairs are disulfide-bonded: cysteine 54–cysteine 58 and cysteine 73–cysteine 165. Asparagine 57 and asparagine 85 each carry an N-linked (GlcNAc...) asparagine glycan.

This sequence belongs to the calycin superfamily. Lipocalin family. Expressed in the vagina, uterus, and Bartholin's glands of female hamsters. Secreted in vaginal discharge.

It is found in the secreted. In terms of biological role, acts as an aphrodisiac pheromone, reliably eliciting copulatory behavior from male hamster. The polypeptide is Aphrodisin (Cricetus cricetus (Black-bellied hamster)).